The chain runs to 277 residues: Large ribosomal subunit protein uL2 (277 aa).

The tract at residues 222–277 (GVTMNPVDHPHGGGEGRTSGGRNPVTPWGFPTKGKKTRNNKATDKFIVSSRHKRKK) is disordered.

Belongs to the universal ribosomal protein uL2 family. In terms of assembly, part of the 50S ribosomal subunit. Forms a bridge to the 30S subunit in the 70S ribosome.

One of the primary rRNA binding proteins. Required for association of the 30S and 50S subunits to form the 70S ribosome, for tRNA binding and peptide bond formation. It has been suggested to have peptidyltransferase activity; this is somewhat controversial. Makes several contacts with the 16S rRNA in the 70S ribosome. The sequence is that of Large ribosomal subunit protein uL2 from Xanthobacter autotrophicus (strain ATCC BAA-1158 / Py2).